The following is a 496-amino-acid chain: Aspartyl/glutamyl-tRNA(Asn/Gln) amidotransferase subunit B (496 aa).

It belongs to the GatB/GatE family. GatB subfamily. In terms of assembly, heterotrimer of A, B and C subunits.

The catalysed reaction is L-glutamyl-tRNA(Gln) + L-glutamine + ATP + H2O = L-glutaminyl-tRNA(Gln) + L-glutamate + ADP + phosphate + H(+). It carries out the reaction L-aspartyl-tRNA(Asn) + L-glutamine + ATP + H2O = L-asparaginyl-tRNA(Asn) + L-glutamate + ADP + phosphate + 2 H(+). Allows the formation of correctly charged Asn-tRNA(Asn) or Gln-tRNA(Gln) through the transamidation of misacylated Asp-tRNA(Asn) or Glu-tRNA(Gln) in organisms which lack either or both of asparaginyl-tRNA or glutaminyl-tRNA synthetases. The reaction takes place in the presence of glutamine and ATP through an activated phospho-Asp-tRNA(Asn) or phospho-Glu-tRNA(Gln). The polypeptide is Aspartyl/glutamyl-tRNA(Asn/Gln) amidotransferase subunit B (Prochlorococcus marinus (strain MIT 9303)).